The chain runs to 272 residues: MSRIASTFSALKSQGRKALIPYVTAGFPFADITPELMHSMVAGGADVIELGVPFSDPSADGPVIQKAGEKALALGIGLAQVLEMVRVFRQKDGTTPVVLMGYANPVERYDIKHGGSATESAFIRDAAQAGVDGVLIVDYPPEECVEFAARLRAHNMDLIFLLAPTSTSARMAQVAEVASGYVYYVSLKGVTGAGTLDVDAVEAMLPRIRQHVKVPVGVGFGIRDAATAKAIGKVADAVVIGSKIIQLIENQPRDKVATVARDFLKEIRAALD.

Active-site proton acceptor residues include E49 and D60.

Belongs to the TrpA family. As to quaternary structure, tetramer of two alpha and two beta chains.

The enzyme catalyses (1S,2R)-1-C-(indol-3-yl)glycerol 3-phosphate + L-serine = D-glyceraldehyde 3-phosphate + L-tryptophan + H2O. The protein operates within amino-acid biosynthesis; L-tryptophan biosynthesis; L-tryptophan from chorismate: step 5/5. The alpha subunit is responsible for the aldol cleavage of indoleglycerol phosphate to indole and glyceraldehyde 3-phosphate. The sequence is that of Tryptophan synthase alpha chain from Polaromonas sp. (strain JS666 / ATCC BAA-500).